The following is a 335-amino-acid chain: POU domain, class 5, transcription factor 2 (335 aa).

The interval 1–23 is disordered; the sequence is MAGRRSSNVCPFPGNSGGGLEGP. Positions 113 to 187 constitute a POU-specific domain; sequence DVSAIQKEME…LLKMWLEEVD (75 aa). The segment at residues 205-264 is a DNA-binding region (homeobox); that stretch reads RKRRRASRERRIGSNLEKLFLQCPEPTPQQISYIAGRLRLQKDLVQVWFSNRSQMAGWPT.

Belongs to the POU transcription factor family. Class-5 subfamily. In terms of tissue distribution, highly restricted to adult testis.

It localises to the nucleus. In terms of biological role, transcription factor that binds preferentially to the octamer motif (5'-ATGTTAAT-3'). May exert a regulatory function in meiotic events that are required for terminal differentiation of male germ cell. The sequence is that of POU domain, class 5, transcription factor 2 (Pou5f2) from Rattus norvegicus (Rat).